Consider the following 371-residue polypeptide: MDPRKVSELRAFVKMCRQDPSVLHTEEMRFLREWVESMGGKVPPATHKAKSEENTKEEKRDKTTEENIKTEELSSEESDLEIDNEGVIEPDTDAPQEMGDENAEITEEMMDEANEKKGAAIEALNDGELQKAIDLFTDAIKLNPRLAILYAKRASVFVKLQKPNAAIRDCDRAIEINPDSAQPYKWRGKAHRLLGHWEEAAHDLALACKLDYDEDASAMLREVQPRAQKIAEHRRKYERKREEREIKERIERVKKAREEHERAQREEEARRQSGSQYGSFPGGFPGGMPGNFPGGMPGMGGAMPGMAGMAGMPGLNEILSDPEVLAAMQDPEVMVAFQDVAQNPSNMSKYQSNPKVMNLISKLSAKFGGQS.

The segment at 38–80 is disordered; the sequence is MGGKVPPATHKAKSEENTKEEKRDKTTEENIKTEELSSEESDL. Residues 49–72 show a composition bias toward basic and acidic residues; sequence AKSEENTKEEKRDKTTEENIKTEE. TPR repeat units lie at residues 113–146, 147–180, and 181–214; these read ANEKKGAAIEALNDGELQKAIDLFTDAIKLNPRL, AILYAKRASVFVKLQKPNAAIRDCDRAIEINPDS, and AQPYKWRGKAHRLLGHWEEAAHDLALACKLDYDE. Residues 255–271 are compositionally biased toward basic and acidic residues; that stretch reads KAREEHERAQREEEARR. Residues 255 to 296 are disordered; that stretch reads KAREEHERAQREEEARRQSGSQYGSFPGGFPGGMPGNFPGGM. Over residues 280–296 the composition is skewed to gly residues; that stretch reads FPGGFPGGMPGNFPGGM. The STI1 domain maps to 321–360; that stretch reads DPEVLAAMQDPEVMVAFQDVAQNPSNMSKYQSNPKVMNLI. Residue S348 is modified to Phosphoserine; by GRK5. N6-acetyllysine occurs at positions 355 and 362.

Belongs to the FAM10 family. In terms of assembly, homotetramer. Interacts with HSC70 as well as DNAJ homologs and HSP90. Interacts (via the C-terminus 302- 318 AA) with GRK5.

The protein localises to the cytoplasm. In terms of biological role, one HIP oligomer binds the ATPase domains of at least two HSC70 molecules dependent on activation of the HSC70 ATPase by HSP40. Stabilizes the ADP state of HSC70 that has a high affinity for substrate protein. Through its own chaperone activity, it may contribute to the interaction of HSC70 with various target proteins. This is Hsc70-interacting protein (St13) from Mus musculus (Mouse).